The following is a 440-amino-acid chain: Streptokinase A (440 aa).

A signal peptide spans 1–26 (MKNYLSIGVIALLFALTFGTVKSVQA).

In terms of biological role, this protein is not a protease, but it activates plasminogen by complexing with it. As a potential virulence factor, it is thought to prevent the formation of effective fibrin barriers around the site of infection, thereby contributing to the invasiveness of the cells. The sequence is that of Streptokinase A (ska) from Streptococcus pyogenes serotype M1.